Consider the following 337-residue polypeptide: Casein kinase I isoform alpha (337 aa).

The 269-residue stretch at 20-288 (YRVIRKIGSG…YLRQLFRILF (269 aa)) folds into the Protein kinase domain. ATP-binding positions include 26–34 (IGSGSFGDI) and Lys-49. The active-site Proton acceptor is the Asp-139.

This sequence belongs to the protein kinase superfamily. CK1 Ser/Thr protein kinase family. Casein kinase I subfamily. As to quaternary structure, interacts with cos. Mg(2+) serves as cofactor. Phosphorylated. The dephosphorylated kinase is active in the cytoplasm while the active kinase in the nucleus is phosphorylated.

The protein localises to the cytoplasm. The protein resides in the nucleus. The enzyme catalyses L-seryl-[protein] + ATP = O-phospho-L-seryl-[protein] + ADP + H(+). It catalyses the reaction L-threonyl-[protein] + ATP = O-phospho-L-threonyl-[protein] + ADP + H(+). Its activity is regulated as follows. Activity increases following DNA damage. Casein kinases are operationally defined by their preferential utilization of acidic proteins such as caseins as substrates. Can phosphorylate a large number of proteins. Negative regulator of wg signaling. Phosphorylates arm directly or indirectly and stimulates its degradation which prevents inappropriate wg signaling. Phosphorylates smo which promotes its accumulation at the cell surface and its signaling activity in response to hh. Together with dco, regulates proteolytic processing of ci by phosphorylating it, which promotes its binding to slmb, the F-box recognition component of the SCF(slmb) E3 ubiquitin-protein ligase required for ci processing. Inhibits condensin II interphase activity by promoting degradation of the Cap-H2 regulatory subunit and limiting the levels of chromatin-bound Cap-H2 which regulates interphase chromosome organization. This chain is Casein kinase I isoform alpha (CkIalpha), found in Drosophila melanogaster (Fruit fly).